The sequence spans 135 residues: Phosphoribosyl-AMP cyclohydrolase (135 aa).

Asp89 lines the Mg(2+) pocket. Cys90 serves as a coordination point for Zn(2+). Mg(2+) contacts are provided by Asp91 and Asp93. Positions 106 and 113 each coordinate Zn(2+).

This sequence belongs to the PRA-CH family. In terms of assembly, homodimer. Mg(2+) serves as cofactor. The cofactor is Zn(2+).

It is found in the cytoplasm. It catalyses the reaction 1-(5-phospho-beta-D-ribosyl)-5'-AMP + H2O = 1-(5-phospho-beta-D-ribosyl)-5-[(5-phospho-beta-D-ribosylamino)methylideneamino]imidazole-4-carboxamide. It participates in amino-acid biosynthesis; L-histidine biosynthesis; L-histidine from 5-phospho-alpha-D-ribose 1-diphosphate: step 3/9. Catalyzes the hydrolysis of the adenine ring of phosphoribosyl-AMP. This Bifidobacterium adolescentis (strain ATCC 15703 / DSM 20083 / NCTC 11814 / E194a) protein is Phosphoribosyl-AMP cyclohydrolase.